We begin with the raw amino-acid sequence, 1092 residues long: Extended synaptotagmin-1 (1092 aa).

M1 is subject to N-acetylmethionine. The Cytoplasmic segment spans residues 1–28 (MEHSPEEGASPEPSGQPPATDSTRDGGS). A disordered region spans residues 1-36 (MEHSPEEGASPEPSGQPPATDSTRDGGSGVPPAGPG). A helical membrane pass occupies residues 29–49 (GVPPAGPGAASEALAVLTSFG). Residues 50–52 (RRL) are Lumenal-facing. A helical membrane pass occupies residues 53 to 73 (LVLVPVYLAGAAGLSVGFVLF). The Cytoplasmic portion of the chain corresponds to 74–1092 (GLALYLGWRR…LMDDRDKGGS (1019 aa)). An SMP-LTD domain is found at 125–303 (DVEKAEWLNK…LPNRLLVPLV (179 aa)). 4 C2 domains span residues 302–423 (LVPD…DNWY), 444–570 (DAEK…QLSS), 616–738 (DAPP…DEWL), and 769–886 (QVNS…ALSG). Phosphoserine; by CDK5 is present on S314. 8 residues coordinate Ca(2+): K334, D335, D347, D394, D396, D398, D400, and D401. Positions 604-628 (WDRESLETGSSVDAPPRPYHTTPNS) are disordered. Residue K804 is modified to N6-acetyllysine. S807 is modified (phosphoserine). Residues 909–937 (HSHSYSHSHSSSSLNDEPEALGGPTHPAS) form a disordered region. The span at 911–921 (HSYSHSHSSSS) shows a compositional bias: low complexity. S937 and S951 each carry phosphoserine. The 123-residue stretch at 959 to 1081 (PLGQVKLTVW…DLSQGAAQWY (123 aa)) folds into the C2 5 domain. Y997 is modified (phosphotyrosine). Positions 1006-1013 (KNRSTKRK) are required for phosphatidylinositol 4,5-bisphosphate-dependent location at the cell membrane.

Belongs to the extended synaptotagmin family. In terms of assembly, interacts with ESYT2 and ESYT3. Interacts with ADGRD1; inhibiting the G-protein-coupled receptor activity of ADGRD1. Interaction with ADGRD1 is abolished when cytosolic calcium increases, relieving ADGRD1 G-protein-coupled receptor activity. Interacts (phosphorylated form) with SLC2A4. Post-translationally, phosphorylated on Ser residues in insulin-treated adipocytes (in vitro); this promotes interaction with SLC2A4.

It localises to the endoplasmic reticulum membrane. The protein localises to the cell membrane. In terms of biological role, binds calcium (via the C2 domains) and translocates to sites of contact between the endoplasmic reticulum and the cell membrane in response to increased cytosolic calcium levels. Helps tether the endoplasmic reticulum to the cell membrane and promotes the formation of appositions between the endoplasmic reticulum and the cell membrane. Acts as an inhibitor of ADGRD1 G-protein-coupled receptor activity in absence of cytosolic calcium. Binds glycerophospholipids in a barrel-like domain and may play a role in cellular lipid transport. The protein is Extended synaptotagmin-1 (Esyt1) of Mus musculus (Mouse).